An 860-amino-acid polypeptide reads, in one-letter code: MSDTKSGDDKTLSVTPMKTLTLKRPGMEQGTVRQNFSHGRTKSVVVETKKRKFSLPGDKPEPAAAAPVPVFTPKPPVAAAPVVQEAPKAAPPPPPRAPVERSGMVLNELSRSEMEARRRALEGSKVREVEDRQRAAEEAKRRAEDEERRKREREESARRQAEEEARLQAEAESRRRAEEEARRRAPLAAELATADEEEEVKPKRAGAGAPVRRLVTPEVARPAKPTKGEEDRRRGKLTLNSALSDEDARARSLSSMRRRQEKFKRAMHNEPREKVMREVILPETITIQELAQRMSERAVDVVKFFMKQGQILKPGDVIDADTAELVATEFGHTVRRVAESDIEEGLFNIADNAEDLVPRPPVVTIMGHVDHGKTSLLDAIRNANVVSGEAGGITQHIGAYQVEKNGQKITFIDTPGHAAFTAMRARGAQATDIAILVVAADDSVMPQTIESISHAKAAGVPIIVAINKIDKHDADPQKVRSELLRHEVFVESMGGEVLDVEVSATKGTNLDKLLEAILLQAEILDLKANPDRTAEGVVIEAQLDKGRGPVATVLVQTGTLMPGDILVAGNEWGRVRALVNDRGEQIKEAPPAMPVEVLGLQGTPLAGDRFAVVNNEARAREITEYRQRLAREKAVAKHAGQRGSLEQMMSQLQTSGLKEFPLVIKGDVQGSIEAINAALDKLGTDEVRARIVHAGAGAITESDVSLAETSGAAIIGFNVRANVQARAAAAAAGIEIRYYSIIYNLVDDVKAALSGLLSPERRETFIGNAEILEIFDITKVGKIAGCRVTEGKVERGAGVRLIRDNVVIHEGTLKTLKRFKDEVSEVPGGQECGMAFQNYEDMRVGDIIECFRVEMVTRTL.

Residues 1–11 (MSDTKSGDDKT) are compositionally biased toward basic and acidic residues. The tract at residues 1-265 (MSDTKSGDDK…MRRRQEKFKR (265 aa)) is disordered. Low complexity predominate over residues 79–88 (AAPVVQEAPK). Over residues 110 to 183 (SRSEMEARRR…RRRAEEEARR (74 aa)) the composition is skewed to basic and acidic residues. Positions 358-525 (PRPPVVTIMG…AILLQAEILD (168 aa)) constitute a tr-type G domain. A G1 region spans residues 367–374 (GHVDHGKT). Residue 367-374 (GHVDHGKT) coordinates GTP. The tract at residues 392-396 (GITQH) is G2. Residues 413 to 416 (DTPG) are G3. GTP-binding positions include 413-417 (DTPGH) and 467-470 (NKID). Residues 467 to 470 (NKID) form a G4 region. The G5 stretch occupies residues 503-505 (SAT).

The protein belongs to the TRAFAC class translation factor GTPase superfamily. Classic translation factor GTPase family. IF-2 subfamily.

It is found in the cytoplasm. Functionally, one of the essential components for the initiation of protein synthesis. Protects formylmethionyl-tRNA from spontaneous hydrolysis and promotes its binding to the 30S ribosomal subunits. Also involved in the hydrolysis of GTP during the formation of the 70S ribosomal complex. The sequence is that of Translation initiation factor IF-2 from Mesorhizobium japonicum (strain LMG 29417 / CECT 9101 / MAFF 303099) (Mesorhizobium loti (strain MAFF 303099)).